The chain runs to 372 residues: NAD(P)H-quinone oxidoreductase subunit 1 (372 aa).

The next 8 membrane-spanning stretches (helical) occupy residues 31 to 51 (PLPMLIMLLAATVSVLVVVWL), 65 to 85 (PEFIGPLGVLAPLADGLKLVL), 97 to 117 (LLFTLGPAIVVIPVFLSYLIL), 128 to 148 (VGLGIFLWIALSSVVPIGLLM), 176 to 196 (LALSVLAVVMMSNSLSTVDIV), 254 to 276 (FALFYLGSYVNLTLSALLFAVLY), 304 to 324 (LIFATIGIGMTLLKAYFLIFL), and 347 to 367 (FLLPVSLVNLLITAGLKLAFP).

The protein belongs to the complex I subunit 1 family. NDH-1 is composed of at least 11 different subunits.

The protein resides in the cellular thylakoid membrane. The enzyme catalyses a plastoquinone + NADH + (n+1) H(+)(in) = a plastoquinol + NAD(+) + n H(+)(out). It carries out the reaction a plastoquinone + NADPH + (n+1) H(+)(in) = a plastoquinol + NADP(+) + n H(+)(out). Its function is as follows. NDH-1 shuttles electrons from an unknown electron donor, via FMN and iron-sulfur (Fe-S) centers, to quinones in the respiratory and/or the photosynthetic chain. The immediate electron acceptor for the enzyme in this species is believed to be plastoquinone. Couples the redox reaction to proton translocation, and thus conserves the redox energy in a proton gradient. In Leptolyngbya boryana (Plectonema boryanum), this protein is NAD(P)H-quinone oxidoreductase subunit 1.